Reading from the N-terminus, the 102-residue chain is Large ribosomal subunit protein bL21 (102 aa).

It belongs to the bacterial ribosomal protein bL21 family. In terms of assembly, part of the 50S ribosomal subunit. Contacts protein L20.

Its function is as follows. This protein binds to 23S rRNA in the presence of protein L20. The protein is Large ribosomal subunit protein bL21 of Geobacter sp. (strain M21).